Consider the following 364-residue polypeptide: tRNA-specific 2-thiouridylase MnmA (364 aa).

Residues 6-13 and Leu-32 contribute to the ATP site; that span reads AMSGGVDS. The active-site Nucleophile is the Cys-101. A disulfide bridge links Cys-101 with Cys-193. An ATP-binding site is contributed by Gly-125. An interaction with tRNA region spans residues 143–145; sequence KDQ. The Cysteine persulfide intermediate role is filled by Cys-193.

This sequence belongs to the MnmA/TRMU family.

The protein resides in the cytoplasm. It catalyses the reaction S-sulfanyl-L-cysteinyl-[protein] + uridine(34) in tRNA + AH2 + ATP = 2-thiouridine(34) in tRNA + L-cysteinyl-[protein] + A + AMP + diphosphate + H(+). In terms of biological role, catalyzes the 2-thiolation of uridine at the wobble position (U34) of tRNA, leading to the formation of s(2)U34. The protein is tRNA-specific 2-thiouridylase MnmA of Rhodococcus jostii (strain RHA1).